The primary structure comprises 643 residues: Tigger transposable element-derived protein 5 (643 aa).

The disordered stretch occupies residues 1 to 50; the sequence is MYSAGPPAVPAPRRCRRPPPGRPMQPPRPPAPAPVPAARPPPPAPGPRPR. The segment covering 20–48 has biased composition (pro residues); sequence PGRPMQPPRPPAPAPVPAARPPPPAPGPR. The region spanning 52–103 is the HTH psq-type domain; it reads AVKMAFRKAYSIKDKLQAIERVKGGERQASVCRDFGVPGGTLRGWLKDEPKL. 2 DNA-binding regions (H-T-H motif) span residues 79–99 and 150–183; these read QASVCRDFGVPGGTLRGWLKD and PLIQAQAEAFARQIYGPECTFKASHGWFWRWQKR. Positions 117–190 constitute an HTH CENPB-type domain; that stretch reads QRKKMRLANE…QKRHGISSQR (74 aa). Residues 197-236 form a disordered region; it reads PVAAGPAPGPPVKQEPAQPTRAGPLPDRAASTPAPAEGGY. A DDE-1 domain is found at 238-358; it reads DEQIYNANVT…LQQKAVLLVA (121 aa). The segment at 366–395 is disordered; it reads EARMPALEESEETRRRCRPEPTGPPEELQT.

This sequence belongs to the tigger transposable element derived protein family.

The protein localises to the nucleus. This Bos taurus (Bovine) protein is Tigger transposable element-derived protein 5 (TIGD5).